Consider the following 601-residue polypeptide: Serine/threonine-protein phosphatase 2A 65 kDa regulatory subunit A beta isoform (601 aa).

Alanine 2 is modified (N-acetylalanine). 15 HEAT repeats span residues 20–58, 59–96, 97–135, 136–173, 174–212, 213–251, 252–290, 291–333, 334–372, 373–411, 412–450, 451–489, 490–528, 529–567, and 568–601; these read DSLY…GVER, TRTE…GGPD, FAHC…TPVA, LEAH…ASNA, VKAE…ELDS, VKTE…SQED, LEAL…GPKI, ALSD…RETV, IMNQ…GKEN, TIEH…GIRQ, LSQS…GVEF, FDEK…GTEW, AQNT…GKEI, TTKQ…DTNA, and LQGE…LALA.

It belongs to the phosphatase 2A regulatory subunit A family. In terms of assembly, PP2A consists of a common heterodimeric core enzyme, composed of a 36 kDa catalytic subunit (subunit C) and a 65 kDa constant regulatory subunit (PR65 or subunit A), that associates with a variety of regulatory subunits. Proteins that associate with the core dimer include three families of regulatory subunits B (the R2/B/PR55/B55, R3/B''/PR72/PR130/PR59 and R5/B'/B56 families), the 48 kDa variable regulatory subunit, viral proteins, and cell signaling molecules. Interacts with IPO9. Interacts with SGO1. Interacts with RAF1.

The PR65 subunit of protein phosphatase 2A serves as a scaffolding molecule to coordinate the assembly of the catalytic subunit and a variable regulatory B subunit. This is Serine/threonine-protein phosphatase 2A 65 kDa regulatory subunit A beta isoform (Ppp2r1b) from Mus musculus (Mouse).